The chain runs to 168 residues: Transcription antitermination protein NusB (168 aa).

The protein belongs to the NusB family.

Functionally, involved in transcription antitermination. Required for transcription of ribosomal RNA (rRNA) genes. Binds specifically to the boxA antiterminator sequence of the ribosomal RNA (rrn) operons. The chain is Transcription antitermination protein NusB from Chlamydia trachomatis serovar A (strain ATCC VR-571B / DSM 19440 / HAR-13).